The primary structure comprises 157 residues: Large ribosomal subunit protein eL24 (157 aa).

Lys2 is covalently cross-linked (Glycyl lysine isopeptide (Lys-Gly) (interchain with G-Cter in SUMO2)). Glu4 carries the post-translational modification ADP-ribosyl glutamic acid. Lys27 carries the N6-acetyllysine; alternate modification. Lys27 is covalently cross-linked (Glycyl lysine isopeptide (Lys-Gly) (interchain with G-Cter in SUMO2); alternate). A Glycyl lysine isopeptide (Lys-Gly) (interchain with G-Cter in SUMO2) cross-link involves residue Lys35. At Lys77 the chain carries N6-acetyllysine. Thr83 carries the post-translational modification Phosphothreonine. Position 86 is a phosphoserine (Ser86). Lys93 bears the N6-acetyllysine mark. Basic and acidic residues predominate over residues 106-117 (EQAIRAAKEAKK). The segment at 106–157 (EQAIRAAKEAKKAKQASKKTAMAAAKAPTKAAPKQKIVKPVKVSAPRVGGKR) is disordered. Residues 123–140 (KKTAMAAAKAPTKAAPKQ) show a composition bias toward low complexity. An N6-succinyllysine modification is found at Lys131. A Glycyl lysine isopeptide (Lys-Gly) (interchain with G-Cter in SUMO2) cross-link involves residue Lys147. Ser149 carries the post-translational modification Phosphoserine.

The protein belongs to the eukaryotic ribosomal protein eL24 family. Component of the large ribosomal subunit. Post-translationally, mono-ADP-ribosylation at Glu-4 by PARP16 inhibits polysome assembly and mRNA loading, thereby inhibiting protein translation.

The protein resides in the cytoplasm. In terms of biological role, component of the large ribosomal subunit. The ribosome is a large ribonucleoprotein complex responsible for the synthesis of proteins in the cell. In Bos taurus (Bovine), this protein is Large ribosomal subunit protein eL24 (RPL24).